The sequence spans 367 residues: Aminomethyltransferase (367 aa).

It belongs to the GcvT family. In terms of assembly, the glycine cleavage system is composed of four proteins: P, T, L and H.

The catalysed reaction is N(6)-[(R)-S(8)-aminomethyldihydrolipoyl]-L-lysyl-[protein] + (6S)-5,6,7,8-tetrahydrofolate = N(6)-[(R)-dihydrolipoyl]-L-lysyl-[protein] + (6R)-5,10-methylene-5,6,7,8-tetrahydrofolate + NH4(+). The glycine cleavage system catalyzes the degradation of glycine. The protein is Aminomethyltransferase of Mycobacterium leprae (strain Br4923).